A 132-amino-acid chain; its full sequence is uncharacterized protein (132 aa).

The next 4 membrane-spanning stretches (helical) occupy residues 6 to 26, 34 to 54, 59 to 79, and 106 to 126; these read WIYAVFTILIIGLGLGSRAFS, NTYLGDSLWAAMIFTGCGFLF, TMITGIISLSFCFVIEFSQLY, and IEAYTIGIAACAAIELLVLGI.

The protein resides in the cell membrane. This is an uncharacterized protein from Bacillus subtilis (strain 168).